A 493-amino-acid chain; its full sequence is Signal recognition particle subunit SRP54 3 (493 aa).

The tract at residues 1–294 is G-domain; the sequence is MVLADVGGSI…NVEPFVARLL (294 aa). GTP contacts are provided by residues 107 to 114, 189 to 193, and 247 to 250; these read GLQGSGKT, DTSGR, and TKLD. The M-domain stretch occupies residues 295 to 493; sequence GRGDLPGLID…KMLAGMRGGA (199 aa).

It belongs to the GTP-binding SRP family. SRP54 subfamily. As to quaternary structure, component of a signal recognition particle (SRP) complex that consists of a 7SL RNA molecule of 300 nucleotides and six protein subunits: SRP72, SRP68, SRP54, SRP19, SRP14 and SRP9.

The protein resides in the cytoplasm. The protein localises to the endoplasmic reticulum. The catalysed reaction is GTP + H2O = GDP + phosphate + H(+). Functionally, component of the signal recognition particle (SRP) complex, a ribonucleoprotein complex that mediates the cotranslational targeting of secretory and membrane proteins to the endoplasmic reticulum (ER). As part of the SRP complex, associates with the SRP receptor (SR) component SRPRA to target secretory proteins to the endoplasmic reticulum membrane. Binds to the signal sequence of presecretory proteins when they emerge from the ribosomes. Displays basal GTPase activity, and stimulates reciprocal GTPase activation of the SR subunit SRPRA. Forms a guanosine 5'-triphosphate (GTP)-dependent complex with the SR subunit SRPRA. SR compaction and GTPase mediated rearrangement of SR drive SRP-mediated cotranslational protein translocation into the ER. Requires the presence of SRP9/SRP14 and/or SRP19 to stably interact with RNA. This is Signal recognition particle subunit SRP54 3 (SRP54-3) from Hordeum vulgare (Barley).